A 257-amino-acid polypeptide reads, in one-letter code: Lipopolysaccharide core biosynthesis glycosyltransferase KdtX (257 aa).

The protein belongs to the glycosyltransferase 2 family. WaaE/KdtX subfamily.

It participates in bacterial outer membrane biogenesis; LPS core biosynthesis. In Serratia marcescens, this protein is Lipopolysaccharide core biosynthesis glycosyltransferase KdtX (kdtX).